A 420-amino-acid chain; its full sequence is Glucose-1-phosphate adenylyltransferase (420 aa).

Residues Tyr107, Gly172, Glu187–Lys188, and Ser205 each bind alpha-D-glucose 1-phosphate.

This sequence belongs to the bacterial/plant glucose-1-phosphate adenylyltransferase family. As to quaternary structure, homotetramer.

It catalyses the reaction alpha-D-glucose 1-phosphate + ATP + H(+) = ADP-alpha-D-glucose + diphosphate. It participates in glycan biosynthesis; glycogen biosynthesis. Functionally, involved in the biosynthesis of ADP-glucose, a building block required for the elongation reactions to produce glycogen. Catalyzes the reaction between ATP and alpha-D-glucose 1-phosphate (G1P) to produce pyrophosphate and ADP-Glc. This Agrobacterium fabrum (strain C58 / ATCC 33970) (Agrobacterium tumefaciens (strain C58)) protein is Glucose-1-phosphate adenylyltransferase.